The primary structure comprises 201 residues: Ribosome maturation factor RimP (201 aa).

This sequence belongs to the RimP family.

Its subcellular location is the cytoplasm. Functionally, required for maturation of 30S ribosomal subunits. This chain is Ribosome maturation factor RimP, found in Acidobacterium capsulatum (strain ATCC 51196 / DSM 11244 / BCRC 80197 / JCM 7670 / NBRC 15755 / NCIMB 13165 / 161).